Consider the following 257-residue polypeptide: Ribonuclease PH (257 aa).

Residues Arg86 and 124 to 126 contribute to the phosphate site; that span reads GTR.

This sequence belongs to the RNase PH family. Homohexameric ring arranged as a trimer of dimers.

The catalysed reaction is tRNA(n+1) + phosphate = tRNA(n) + a ribonucleoside 5'-diphosphate. In terms of biological role, phosphorolytic 3'-5' exoribonuclease that plays an important role in tRNA 3'-end maturation. Removes nucleotide residues following the 3'-CCA terminus of tRNAs; can also add nucleotides to the ends of RNA molecules by using nucleoside diphosphates as substrates, but this may not be physiologically important. Probably plays a role in initiation of 16S rRNA degradation (leading to ribosome degradation) during starvation. The sequence is that of Ribonuclease PH from Sulfurihydrogenibium sp. (strain YO3AOP1).